A 259-amino-acid chain; its full sequence is Chloroplastic group IIB intron splicing facilitator CRS2, chloroplastic (259 aa).

A disordered region spans residues 1–21; that stretch reads MSLAVATPASARLSPLTTSSP. The transit peptide at 1 to 49 directs the protein to the chloroplast; the sequence is MSLAVATPASARLSPLTTSSPEPCRRRRLLLSAAAPLRRTRLRRRIAVV. Tyr-77 serves as a coordination point for tRNA. The active-site Proton acceptor is the His-82. TRNA is bound by residues Tyr-127, Asn-129, and Asn-175.

This sequence belongs to the PTH family. CRS2 subfamily. As to quaternary structure, part of large ribonucleo-protein complexes that include group IIB introns and either CAF1 or CAF2.

It is found in the plastid. Its subcellular location is the chloroplast stroma. Functionally, required for the splicing of group IIB introns in chloroplasts. In Oryza sativa subsp. japonica (Rice), this protein is Chloroplastic group IIB intron splicing facilitator CRS2, chloroplastic.